Consider the following 452-residue polypeptide: tRNA modification GTPase MnmE (452 aa).

3 residues coordinate (6S)-5-formyl-5,6,7,8-tetrahydrofolate: arginine 21, glutamate 78, and lysine 118. The region spanning 214 to 375 (GMKAVIAGRP…LREHLKTSMG (162 aa)) is the TrmE-type G domain. Asparagine 224 provides a ligand contact to K(+). GTP-binding positions include 224 to 229 (NAGKSS), 243 to 249 (TNIAGTT), and 268 to 271 (DTAG). Residue serine 228 participates in Mg(2+) binding. Threonine 243, isoleucine 245, and threonine 248 together coordinate K(+). Threonine 249 serves as a coordination point for Mg(2+). A (6S)-5-formyl-5,6,7,8-tetrahydrofolate-binding site is contributed by lysine 452.

This sequence belongs to the TRAFAC class TrmE-Era-EngA-EngB-Septin-like GTPase superfamily. TrmE GTPase family. Homodimer. Heterotetramer of two MnmE and two MnmG subunits. K(+) serves as cofactor.

It is found in the cytoplasm. Exhibits a very high intrinsic GTPase hydrolysis rate. Involved in the addition of a carboxymethylaminomethyl (cmnm) group at the wobble position (U34) of certain tRNAs, forming tRNA-cmnm(5)s(2)U34. The chain is tRNA modification GTPase MnmE from Haemophilus ducreyi (strain 35000HP / ATCC 700724).